A 376-amino-acid polypeptide reads, in one-letter code: 2-hydroxypropyl-CoM lyase (376 aa).

His-218, Cys-220, and Cys-341 together coordinate Zn(2+).

This sequence belongs to the vitamin-B12 independent methionine synthase family. In terms of assembly, homohexamer. Component I of the aliphatic epoxide carboxylation complex together with components II, III and IV. Zn(2+) is required as a cofactor.

It catalyses the reaction (R)-2-hydroxypropyl-coenzyme M = (R)-1,2-epoxypropane + coenzyme M. It carries out the reaction (S)-2-hydroxypropyl-coenzyme M = (S)-1,2-epoxypropane + coenzyme M. It functions in the pathway alkene metabolism; propylene degradation. Inhibited by methylepoxypropane. Inhibited by the zinc chelator 4-(2-pyridylazo)resorcinol (PAR), in the presence of p- (hydroxymercuri)benzenesulfonic acid (PMPS), and by EDTA. Not inhibited by the coenzyme M analog 2-bromoethanesulfonate (BES). Its function is as follows. Involved in aliphatic epoxide carboxylation. Catalyzes the addition of coenzyme M (CoM) to either R- or S-epoxypropane to form the thioether conjugate 2-hydroxypropyl-CoM. Catalyzes the reaction of CoM with R-epoxypropane at a rate approximately twice of that with S-epoxypropane. The CoM analogs 2-mercaptopropionate, 2-mercaptoethanol and cysteine substitute poorly for CoM as the thiol substrate. This is 2-hydroxypropyl-CoM lyase from Xanthobacter autotrophicus (strain ATCC BAA-1158 / Py2).